The following is a 586-amino-acid chain: Retron Ec67 protein (586 aa).

Residues 29–262 form the Reverse transcriptase domain; sequence FLTNVLYRIG…SRQEVTGLTV (234 aa). The Mg(2+) site is built by D120, D201, and D202.

It belongs to the bacterial reverse transcriptase family.

The enzyme catalyses DNA(n) + a 2'-deoxyribonucleoside 5'-triphosphate = DNA(n+1) + diphosphate. It catalyses the reaction Endonucleolytic cleavage to 5'-phosphomonoester.. In terms of biological role, reverse transcriptase (RT) component of antiviral defense system retron Ec67, minimally composed of a non-coding RNA (ncRNA) and this RT. Expression of these 2 elements confers protection against bacteriophage T5. At multiplicity of infection (MOI) of 0.02 cultures grow normally when infected with T5 without collapsing, at MOI 2 cultures enter growth stasis. Responsible for synthesis of msDNA-Ec67 (a branched molecule with RNA linked by a 2',5'-phosphodiester bond to ssDNA). The retron transcript serves as primer (from a conserved internal G residue) and template for the reaction, and codes for the RT. Can use other retrons as substrate (msDNA-Mx162 and msDNA-Ec86). Also able to synthesize DNA from a DNA template at least in vitro, although the enzyme is less active with a DNA template. This is Retron Ec67 protein from Escherichia coli.